The primary structure comprises 4095 residues: MNKNCYKLIFSKTRGCLVPVAECITSAVDSGSSDSVVVSEKTDEEDRQGSIEDYRLSNVCLSVKTFLNPVSSALCLNWKSVSVLLLSMVAAPNFAQSAEEAAKAEKTPKLTEIQNGNDGIQLETKNQNIGVGAGTTENNHPTKLYKTENNVIVIDIAKPNDKGISDNRFQKFNIPNGAVFKNNKDQQRSELVGYLEGNKNLADKEAKVILNQVTGSELSQIKGALEILGTKADLVIANQHGINLNGVQTINAGRFVATTSKLIDPNKMEFDVTQGTVTIDVNGFATDNLPYLDIVAKKIEQKGTIGNKEKEKNKTSETEITFIAGKGKIKYNIENDGKTKLEVQKDSNTSQPSDKEEVAITGASTGAMHGKSIKLIVTEQGAGVKHDGIILSENDIKIESNKGDIDLGDKLQAKNEISLNNAKRITIANEITADKSITITADDVKLKNNKEASATEEAKLKGKGKLASKKVKVEAKKSLVLDDETKVVATDLELKSQTLTNQGRIYGNKVKIDTDKLVNKKEIYAEDNLDITTKGKTVTVSVNKDNKRKADVKEETVADLDVGFENTGTIESKSKAKLTFKDNTSFVSKGNKFIKAKDELTIDAQNVVISENDELQTTARLTINAAGNVVNNGLLASGKTLTINAKQGSIYNEKGILGAREQLTLSAKGNNKETEGNIINGADSLLHSEGKMELDAENTVYNLGNIFAKSDLTVKANELINDVKLSGSITKKSPYSVLNRYRRSDIASHGWHNNDYRLWINPIEFEKAEVKVEKAGLIRAEGNFKFEGKKGDNQQDATLTNHGVINVKNTFEAQNAKVVNNMKAYQANLLTEFFKQKQDITFNYQPRARLFLSALSGQAERKFNSLEELFDGLFSEQPITNSSSYYADNSQAVHLLEEIKSPTFQKAMTLVFGANWKNEDHKKLSQRWKEFKEKQDAHFDYRPTDKAKILAQRINGKIDELKNGSTGGFSESERITVGQHKFDLSKVEFRSEVNRKENLNNSNVDLSALSDLLSIPNLFVDNSVQLDKTVDKNIEIDEEDEFLLKPHTGEEPDLLNENELSENGKFLDKLLGEIGEKTYIREVSDDWERDPDEPDEPDYKTESRLETRDRFDTLPSEVQDKLRQKFNEYKEKAQQKRQAEALQAKTKNEQLQSDLETGYKEEEKRQAKNDLEKQAELQQLDQQEKEKLAKEKELQGKINEEKQQEALAKQKQEQQKQADAKAKIEEEKRLEEYRKELAKDHQIEEALSKNQFLKEVDDTRPKVETDPLYRTKLQYINQDEYFGSKYFLNKVGSSTDAGKKVAVIGDNYLEHQLITKSIEKKVDNHLALKYQVNDAQLVKKLIDNSYFESKELGLKVGEALTKEQQNQLKQDIVWYVKANINNKEVLLPQVYFANKTLRDAEKFKGLGDALIRANEINLKTRDVLNSGTISGKNIDIEAENKIKNRGDILSEESTRLVGHKGIDNTARSFVNGNGDVEVQRASIRTEGHLHLEADEDSDINSKGSDIKGKTGFVKARNFNTTDTHRTEHSVEKGRIFSKKGEILGYRKESTQKAISVGSNTEFDHVHFAIKNDVNQEGSKIKAKVVTGVVQGDYNTKAGRNAQQTERYIRLDQEYSSGHISGAGFTVSHERDSQNGEKTNIGGASSNTGTGFTLGGSFSETREKETSLTHTNSDLQVDHGILHVLKKAEIGGVDINKHKFTGKAVEEDEAKAEQQAKAKAAPDATDNAAQKEEPKFKVLSQSEVDDLMTEKSANDLFNKYKKVKEDEGFELSAKEITSNKQKDEYHLDSERSVLKFGIETEGHSAIADAVSHVAKEIVEAQRGVKQDGTVALQHISDVANIVTGELVGGSSKFGFERNYETNKVKETSDIRTKIAGNITLSAHGGNLQLKNVESDANSKLTLQAKRNVDILDGETTRESTERQSRQKFAFGINSGCSVMSGGCNGGVSGSVDGNESFTTEKSVTHNNSLLRAKNLKIAAGKDLNLISSNIKADHLDLNIKGKTNIVSKQDSFDRLYRGFDFSASAGAALSSSTLVKGNGSFGAGYTHEVENRKLLNQQAGIVANRITGQIKDLDLVAAHFINKDENSGFRVSGNVTSQQLNDSHHKDGGSVGVSVGINERGASSFNVRGGRAEQKHYDAVQKSVISGINLKDNNVTGEIVDDLSKAKTVTRDDVYASTQFNFEVADLVELGEKAKSKLQSKFSKAVNNDAEQPTTTRISSEDVVEMVDNPLYGSNADVRKLRTLDEVGEGYSTLGDQNANKGRKLPNGSDDIYSLLGKVKVSGDEPVYDKVSAEGAYDLLGDSNANKGRTLRNNSDDLYSTVGDANSDISRIRSNVYDEIAAGPYSLLGRTKAAEEHIYEQIGEGPYSLLGNGSAVRNRTLGGESNSTYSTVGDANSDISRIRSNVYDEIVAGPYSLLGKPKAAEEHIYEQIGEGPYSLLGNGSAVRNRTLGGESDSPYSTVGDANSDISRIRSNVYDEIVAGPYSLLGRTKAAEEHIYEQIGEGPYSLLGNGSAVRNRTLGGESDSPYSLLGGEGTRNKVLADTIESIYSTLSRPQASSNLEMVDNPLYDSVRRSASDQLPELPTVRNLLNSDTEAGNGTYSEITSRTRNANDPLPPLPNEFRTRLSQGADLADHVYDTIGSIYSVLSKPKASSNLEMVDNPLYGSVRRAAGDQLPELPTVKTLLNKVEEVGNEIYSEITSKTRSANDPLPALPNFRLTQEVDTADHIYADINDVVNRANKAKRDLPATPEATPKVAVDGGDYATIGEVSPLQPRASRQQGSSDYEEIPLPQETAPQKTSPVKRTSAEGEDGYATIAEVLQPRAAKGQVSDYETIPLDEPSQAAVRTERSAVEGDYAEITSPSIQPRSARGQSGGEEFEPFPSEFSSEPQSPKRALPAENAVVNELGNELKARLKSKEDQANPAKAEVSEPIYATLDKSPEGLARAKAKGDEAAAANPIVKTRVEDDVAPELPARPSNLSDSISNETIAENGQSVALGTPKSAVAESNRNNNGNQKLQSEGAEGVSPKTKSEDKSWFAKVKDFFFAKSNKSQAKEAKSEQETVSKPNYDSLEDDLNLKNLLALEDKRGSSFEENVLKNPEFLAEAREIAKKYIPEATIKQMGNSPEFDEILTEGAKKVEKRINDALTFKPSVDEFNEIQGLVKNIQKGSAVDDLNAQTLAITEALADTSKTIQRNPKLKEEVQGAIEEFLKSSQGKELTVEMIEKLNHGLRPDEGSDRLLYKKENLTKENAVFSSPQASKIQLNETVDFINQAIKQNVEPSVLAGLVYQRLIAYHPFAEGNGRMARVVVNKILLDAGYPPFTKFSSEFETQIIPQTKATAKSATSAEVVKEFLTELGKKSSPQEGGANNQNGQATSPVTLKSKDVSEVENTQSADSLTIKQPEQGKAGGQLPSVPKVETSVNEVAPLSSVPAELKDAAGGNKKAAEKSEGATGVEKEKTTLFQRVKQFFTGSKSGAKPVAGDETANKVNYQDLEDNLNLKGLISLEDDRNANFESNVLKNEKFLDEAREISKKSIPEATVKQMSHLPEFDDILTEGAKKVESRINKAITFRPSVEEFSEIQDLVKTLPKTKVIEDLSTKTNEITEALAATSKTIQRTPELKEQLKTAIEDFLQNSQGKPLTVQMIENLNHGLRPDEGEGRLLYKKENLTKENAVFSSPEAAKIQLAETVDFINRAKNEGIEPSVVGALVYQRLIAYHPFAEGNGRMARVIVNKILLDAGYPAFTKFSDEFEPQIIPQTKASTKSATSSEVVVEFLKELAKKGSKEDNEQNLEKTDRTSTDLTESAVENSAALSSGTVRSATVSETVTETEQAKAKPVSDLVSSKDLVEQQRTVLQRIQDQFQPLKVKSKIDAVRSSVEEFGGEVSFKFAQSKGEVYKEIVKHIETQNGVCESTCAHWIAKNVNPTDENFFNTLYEGGKKGHLKKETIDSIKKLQTEFINSGSATQQFKLTDSWLQEQGVVPKEKKVADFVRRDEVSGTVSKNDVSSLVKAILDTGDDTAGVKKISINLEGGSHTVSAAVDGSKVTFFDPNFGEMTFPTHQQFENWLKNAFWQKSGYAGKQEGRRFFNVVNYKKNN.

The N-terminal stretch at 1 to 97 (MNKNCYKLIF…MVAAPNFAQS (97 aa)) is a signal peptide. Binds bovine IgG2 Fc regions lie at residues 972-1515 (SERI…FVKA) and 1116-1255 (SEVQ…FLKE). Disordered regions lie at residues 1082-1117 (EVSD…LPSE), 1130-1154 (KEKA…LQSD), 1204-1223 (QEAL…AKAK), 1625-1652 (TVSH…TGFT), and 1705-1732 (EEDE…QKEE). Acidic residues predominate over residues 1087–1096 (WERDPDEPDE). Basic and acidic residues-rich tracts occupy residues 1097–1117 (PDYK…LPSE) and 1130–1139 (KEKAQQKRQA). Residues 1116–1247 (SEVQDKLRQK…AKDHQIEEAL (132 aa)) adopt a coiled-coil conformation. Positions 1716 to 1727 (KAKAAPDATDNA) are enriched in low complexity. 12 repeat units span residues 2250–2271 (YSTL…SDDI), 2272–2295 (YSLL…AEGA), 2296–2317 (YDLL…SDDL), 2318–2343 (YSTV…AAGP), 2344–2365 (YSLL…GEGP), 2366–2387 (YSLL…SNST), 2388–2413 (YSTV…VAGP), 2414–2435 (YSLL…GEGP), 2436–2457 (YSLL…SDSP), 2458–2483 (YSTV…VAGP), 2484–2505 (YSLL…GEGP), and 2506–2527 (YSLL…SDSP). The 12 X 22 AA approximate repeats stretch occupies residues 2250 to 2527 (YSTLGDQNAN…RTLGGESDSP (278 aa)). Composition is skewed to polar residues over residues 2592-2611 (SDTE…TRNA) and 2794-2803 (TAPQKTSPVK). 6 disordered regions span residues 2592 to 2617 (SDTE…PLPP), 2765 to 2809 (TIGE…SAEG), 2825 to 2894 (AKGQ…SPKR), 2914 to 2933 (LKSK…EPIY), 2943 to 3033 (LARA…KSED), and 3049 to 3069 (NKSQ…PNYD). Positions 2880–2889 (PFPSEFSSEP) are enriched in low complexity. Polar residues-rich tracts occupy residues 2977-2996 (SNLS…QSVA) and 3005-3018 (AESN…QKLQ). Residues 3052-3062 (QAKEAKSEQET) are compositionally biased toward basic and acidic residues. The region spanning 3218-3355 (LTVEMIEKLN…AEVVKEFLTE (138 aa)) is the Fido 1 domain. The interval 3222-4095 (MIEKLNHGLR…FNVVNYKKNN (874 aa)) is yopT-like. A binds bovine IgG2 Fc region spans residues 3354–3698 (TELGKKSSPQ…VDFINRAKNE (345 aa)). 2 disordered regions span residues 3357 to 3415 (GKKS…PSVP) and 3432 to 3454 (AELK…ATGV). Polar residues-rich tracts occupy residues 3360–3379 (SSPQ…SPVT) and 3388–3401 (VENT…TIKQ). The segment covering 3443-3454 (KAAEKSEGATGV) has biased composition (basic and acidic residues). The arm region stretch occupies residues 3535-3557 (IPEATVKQMSHLPEFDDILTEGA). Positions 3640–3777 (LTVQMIENLN…SEVVVEFLKE (138 aa)) constitute a Fido 2 domain. ATP-binding positions include 3670–3671 (KE), 3722–3724 (GNG), R3728, and Q3757. The segment covering 3783–3798 (SKEDNEQNLEKTDRTS) has biased composition (basic and acidic residues). A disordered region spans residues 3783–3829 (SKEDNEQNLEKTDRTSTDLTESAVENSAALSSGTVRSATVSETVTET). The span at 3799–3815 (TDLTESAVENSAALSSG) shows a compositional bias: polar residues. Over residues 3816–3829 (TVRSATVSETVTET) the composition is skewed to low complexity. Active-site for cysteine protease activity residues include C3910, H4033, and D4048.

It in the central section; belongs to the fic family. In the C-terminal section; belongs to the peptidase C58 family. Immunoglobulin-binding protein. The long form of the protein is probably processed, and/or the transcript may be subject to differential translational initiation.

It is found in the secreted. The protein localises to the cell outer membrane. It catalyses the reaction L-tyrosyl-[protein] + ATP = O-(5'-adenylyl)-L-tyrosyl-[protein] + diphosphate. The enzyme catalyses L-threonyl-[protein] + ATP = 3-O-(5'-adenylyl)-L-threonyl-[protein] + diphosphate. Its function is as follows. Adenylyltransferase involved in virulence by mediating the addition of adenosine 5'-monophosphate (AMP) to specific tyrosine residue of host Rho GTPases RhoA, Rac and Cdc42. The resulting AMPylation inactivates Rho GTPases, thereby inhibiting actin assembly in infected cells. Probably also acts as a cysteine protease, which may play a central role after invasion of host cell and in virulence. Possible member (with IbpB) of a 2 partner secretion. Probably able to bind bovine epithelial cells (host cells). May participate in the formation of fibrils at the surface of the bacteria. The sequence is that of Protein adenylyltransferase and cysteine protease IbpA (ibpA) from Histophilus somni (strain 2336) (Haemophilus somnus).